Here is a 576-residue protein sequence, read N- to C-terminus: Phosphoenolpyruvate-protein phosphotransferase (576 aa).

His189 functions as the Tele-phosphohistidine intermediate in the catalytic mechanism. Phosphoenolpyruvate is bound by residues Arg296 and Arg332. The Mg(2+) site is built by Glu431 and Asp455. Residues Asn454–Asp455 and Arg465 contribute to the phosphoenolpyruvate site. The active-site Proton donor is the Cys502.

Belongs to the PEP-utilizing enzyme family. Homodimer. Requires Mg(2+) as cofactor.

It is found in the cytoplasm. It carries out the reaction L-histidyl-[protein] + phosphoenolpyruvate = N(pros)-phospho-L-histidyl-[protein] + pyruvate. Functionally, general (non sugar-specific) component of the phosphoenolpyruvate-dependent sugar phosphotransferase system (sugar PTS). This major carbohydrate active-transport system catalyzes the phosphorylation of incoming sugar substrates concomitantly with their translocation across the cell membrane. Enzyme I transfers the phosphoryl group from phosphoenolpyruvate (PEP) to the phosphoryl carrier protein (HPr). This Buchnera aphidicola subsp. Baizongia pistaciae (strain Bp) protein is Phosphoenolpyruvate-protein phosphotransferase (ptsI).